Reading from the N-terminus, the 400-residue chain is Snake venom metalloproteinase H3 (400 aa).

Residues Phe1 to Ser6 form the signal peptide. A propeptide spanning residues Ser7–Thr176 is cleaved from the precursor. A Peptidase M12B domain is found at Lys180 to Pro377. The Ca(2+) site is built by Glu183 and Asp267. Cystine bridges form between Cys291-Cys372, Cys331-Cys356, and Cys333-Cys339. Zn(2+) is bound at residue His316. Glu317 is an active-site residue. His320 and His326 together coordinate Zn(2+). Residues Cys372, Asn375, Val387, Asn390, Leu392, Glu394, and Asp400 each contribute to the Ca(2+) site. Residues Leu378–Asp400 constitute a propeptide that is removed on maturation.

The protein belongs to the venom metalloproteinase (M12B) family. P-I subfamily. As to quaternary structure, monomer. Requires Zn(2+) as cofactor. As to expression, expressed by the venom gland.

It localises to the secreted. Functionally, snake venom metalloproteinase that impairs hemostasis in the envenomed animal. This is Snake venom metalloproteinase H3 from Deinagkistrodon acutus (Hundred-pace snake).